The primary structure comprises 305 residues: Glycerol-3-phosphate dehydrogenase [NAD(P)+] (305 aa).

NADPH-binding residues include tryptophan 11, arginine 31, and lysine 79. Sn-glycerol 3-phosphate-binding residues include lysine 79 and glycine 107. NADPH is bound at residue alanine 111. Residues lysine 162, aspartate 215, serine 225, arginine 226, and asparagine 227 each coordinate sn-glycerol 3-phosphate. Lysine 162 (proton acceptor) is an active-site residue. Residue arginine 226 participates in NADPH binding. Residue glutamate 252 coordinates NADPH.

This sequence belongs to the NAD-dependent glycerol-3-phosphate dehydrogenase family.

It localises to the cytoplasm. The enzyme catalyses sn-glycerol 3-phosphate + NAD(+) = dihydroxyacetone phosphate + NADH + H(+). It catalyses the reaction sn-glycerol 3-phosphate + NADP(+) = dihydroxyacetone phosphate + NADPH + H(+). It functions in the pathway membrane lipid metabolism; glycerophospholipid metabolism. Functionally, catalyzes the reduction of the glycolytic intermediate dihydroxyacetone phosphate (DHAP) to sn-glycerol 3-phosphate (G3P), the key precursor for phospholipid synthesis. The sequence is that of Glycerol-3-phosphate dehydrogenase [NAD(P)+] from Gloeobacter violaceus (strain ATCC 29082 / PCC 7421).